A 332-amino-acid chain; its full sequence is Ferredoxin--NADP reductase 1 (332 aa).

FAD-binding residues include Asp35, Lys43, Phe48, Val88, Phe123, Asp284, and Thr325.

Belongs to the ferredoxin--NADP reductase type 2 family. In terms of assembly, homodimer. FAD serves as cofactor.

The catalysed reaction is 2 reduced [2Fe-2S]-[ferredoxin] + NADP(+) + H(+) = 2 oxidized [2Fe-2S]-[ferredoxin] + NADPH. The polypeptide is Ferredoxin--NADP reductase 1 (Listeria monocytogenes serotype 4b (strain F2365)).